The following is a 475-amino-acid chain: Protein nucleotidyltransferase YdiU (475 aa).

Residues Gly-82, Gly-84, Arg-85, Lys-105, Asp-117, Gly-118, Arg-168, and Arg-175 each coordinate ATP. The Proton acceptor role is filled by Asp-240. Positions 241 and 250 each coordinate Mg(2+). Asp-250 is a binding site for ATP.

The protein belongs to the SELO family. The cofactor is Mg(2+). Mn(2+) serves as cofactor.

It carries out the reaction L-seryl-[protein] + ATP = 3-O-(5'-adenylyl)-L-seryl-[protein] + diphosphate. The enzyme catalyses L-threonyl-[protein] + ATP = 3-O-(5'-adenylyl)-L-threonyl-[protein] + diphosphate. It catalyses the reaction L-tyrosyl-[protein] + ATP = O-(5'-adenylyl)-L-tyrosyl-[protein] + diphosphate. The catalysed reaction is L-histidyl-[protein] + UTP = N(tele)-(5'-uridylyl)-L-histidyl-[protein] + diphosphate. It carries out the reaction L-seryl-[protein] + UTP = O-(5'-uridylyl)-L-seryl-[protein] + diphosphate. The enzyme catalyses L-tyrosyl-[protein] + UTP = O-(5'-uridylyl)-L-tyrosyl-[protein] + diphosphate. Functionally, nucleotidyltransferase involved in the post-translational modification of proteins. It can catalyze the addition of adenosine monophosphate (AMP) or uridine monophosphate (UMP) to a protein, resulting in modifications known as AMPylation and UMPylation. This is Protein nucleotidyltransferase YdiU from Aeromonas salmonicida (strain A449).